The sequence spans 433 residues: 3-phosphoshikimate 1-carboxyvinyltransferase (433 aa).

3-phosphoshikimate is bound by residues Lys-15, Ser-16, and Arg-20. Phosphoenolpyruvate is bound at residue Lys-15. Phosphoenolpyruvate is bound by residues Gly-96 and Arg-124. 3-phosphoshikimate is bound by residues Ser-169, Gln-171, Ser-195, Asp-318, and Lys-345. Residue Gln-171 coordinates phosphoenolpyruvate. Asp-318 serves as the catalytic Proton acceptor. Residues Arg-349 and Arg-393 each coordinate phosphoenolpyruvate.

It belongs to the EPSP synthase family. In terms of assembly, monomer.

It is found in the cytoplasm. The enzyme catalyses 3-phosphoshikimate + phosphoenolpyruvate = 5-O-(1-carboxyvinyl)-3-phosphoshikimate + phosphate. Its pathway is metabolic intermediate biosynthesis; chorismate biosynthesis; chorismate from D-erythrose 4-phosphate and phosphoenolpyruvate: step 6/7. In terms of biological role, catalyzes the transfer of the enolpyruvyl moiety of phosphoenolpyruvate (PEP) to the 5-hydroxyl of shikimate-3-phosphate (S3P) to produce enolpyruvyl shikimate-3-phosphate and inorganic phosphate. The sequence is that of 3-phosphoshikimate 1-carboxyvinyltransferase from Chlorobium luteolum (strain DSM 273 / BCRC 81028 / 2530) (Pelodictyon luteolum).